We begin with the raw amino-acid sequence, 1278 residues long: NPC intracellular cholesterol transporter 1 (1278 aa).

A signal peptide spans methionine 1–serine 22. Residues glutamine 23–threonine 261 are Lumenal-facing. Disulfide bonds link cysteine 25–cysteine 74, cysteine 31–cysteine 42, cysteine 63–cysteine 109, cysteine 75–cysteine 113, cysteine 97–cysteine 238, cysteine 100–cysteine 160, cysteine 177–cysteine 184, cysteine 227–cysteine 243, and cysteine 240–cysteine 247. Residue asparagine 41 participates in cholesterol binding. Asparagine 70 is a glycosylation site (N-linked (GlcNAc...) asparagine). Glutamine 79 serves as a coordination point for cholesterol. Residues asparagine 122 and asparagine 135 are each glycosylated (N-linked (GlcNAc...) asparagine). Asparagine 158 is a glycosylation site (N-linked (GlcNAc...) asparagine; atypical). An important for cholesterol binding and cholesterol transfer from NPC1 to liposomes region spans residues leucine 175–isoleucine 205. Asparagine 185 and asparagine 222 each carry an N-linked (GlcNAc...) asparagine glycan. Residues isoleucine 262–valine 282 traverse the membrane as a helical segment. Residues phenylalanine 283–proline 350 are Cytoplasmic-facing. Residues glycine 351 to valine 371 form a helical membrane-spanning segment. The Lumenal portion of the chain corresponds to arginine 372–aspartate 620. Residues asparagine 452, asparagine 459, asparagine 478, asparagine 524, asparagine 557, asparagine 572, and asparagine 598 are each glycosylated (N-linked (GlcNAc...) asparagine). 2 cysteine pairs are disulfide-bonded: cysteine 468–cysteine 479 and cysteine 516–cysteine 533. The SSD domain occupies aspartate 620–leucine 785. A helical membrane pass occupies residues valine 621 to histidine 641. Residues methionine 642–lysine 653 lie on the Cytoplasmic side of the membrane. Residues valine 654–phenylalanine 675 form a helical membrane-spanning segment. Residues serine 676–isoleucine 685 lie on the Lumenal side of the membrane. The chain crosses the membrane as a helical span at residues valine 686 to valine 706. The Cytoplasmic segment spans residues glutamine 707–glutamate 730. Residues valine 731–leucine 751 traverse the membrane as a helical segment. Over serine 752 to threonine 759 the chain is Lumenal. The chain crosses the membrane as a helical span at residues phenylalanine 760–leucine 783. The Cytoplasmic segment spans residues glycine 784–aspartate 832. Residues tryptophan 833–leucine 853 traverse the membrane as a helical segment. Residues asparagine 854–aspartate 1097 are Lumenal-facing. Cysteine 909 and cysteine 914 are joined by a disulfide. Asparagine 916, asparagine 931, asparagine 961, asparagine 968, asparagine 1064, and asparagine 1072 each carry an N-linked (GlcNAc...) asparagine glycan. Disulfide bonds link cysteine 956/cysteine 1011, cysteine 957/cysteine 979, and cysteine 967/cysteine 976. Residues threonine 1098–glycine 1118 traverse the membrane as a helical segment. The Cytoplasmic portion of the chain corresponds to cysteine 1119–alanine 1124. Residues valine 1125–tryptophan 1145 traverse the membrane as a helical segment. The Lumenal segment spans residues glycine 1146 to asparagine 1150. Residues alanine 1151–isoleucine 1171 form a helical membrane-spanning segment. Over threonine 1172 to methionine 1194 the chain is Cytoplasmic. A helical transmembrane segment spans residues glycine 1195–phenylalanine 1215. Residues alanine 1216 to isoleucine 1223 are Lumenal-facing. Residues phenylalanine 1224–leucine 1244 traverse the membrane as a helical segment. The Cytoplasmic portion of the chain corresponds to proline 1245–phenylalanine 1278. Residues leucine 1275–phenylalanine 1278 are required for location in lysosomes. The Di-leucine motif signature appears at leucine 1275 to phenylalanine 1278.

Belongs to the patched family. Interacts (via the second lumenal domain) with NPC2. Interacts with TMEM97; the interaction may decrease NPC1 availability to the cell. Interacts with TIM1. Interacts with SLC38A9; this interaction inhibits cholesterol-mediated mTORC1 activation via its sterol transport activity. As to quaternary structure, (Microbial infection) Interacts with ebolavirus glycoprotein. N-glycosylated.

Its subcellular location is the late endosome membrane. It is found in the lysosome membrane. The catalysed reaction is cholesterol(in) = cholesterol(out). In terms of biological role, intracellular cholesterol transporter which acts in concert with NPC2 and plays an important role in the egress of cholesterol from the endosomal/lysosomal compartment. Unesterified cholesterol that has been released from LDLs in the lumen of the late endosomes/lysosomes is transferred by NPC2 to the cholesterol-binding pocket in the N-terminal domain of NPC1. Cholesterol binds to NPC1 with the hydroxyl group buried in the binding pocket. Binds oxysterol with higher affinity than cholesterol. May play a role in vesicular trafficking in glia, a process that may be crucial for maintaining the structural and functional integrity of nerve terminals. Inhibits cholesterol-mediated mTORC1 activation throught its interaction with SLC38A9. Its function is as follows. (Microbial infection) Acts as an endosomal entry receptor for ebolavirus. The sequence is that of NPC intracellular cholesterol transporter 1 from Homo sapiens (Human).